The sequence spans 202 residues: Urease accessory protein UreG (202 aa).

13 to 20 (GPVGAGKT) provides a ligand contact to GTP.

This sequence belongs to the SIMIBI class G3E GTPase family. UreG subfamily. As to quaternary structure, homodimer. UreD, UreF and UreG form a complex that acts as a GTP-hydrolysis-dependent molecular chaperone, activating the urease apoprotein by helping to assemble the nickel containing metallocenter of UreC. The UreE protein probably delivers the nickel.

It localises to the cytoplasm. In terms of biological role, facilitates the functional incorporation of the urease nickel metallocenter. This process requires GTP hydrolysis, probably effectuated by UreG. This is Urease accessory protein UreG from Dinoroseobacter shibae (strain DSM 16493 / NCIMB 14021 / DFL 12).